A 347-amino-acid polypeptide reads, in one-letter code: G-protein coupled receptor homolog U12 (347 aa).

A run of 6 helical transmembrane segments spans residues 36-56, 67-87, 103-124, 147-167, 194-214, and 236-256; these read GITL…MILY, FYVI…FFMT, LVYF…IIAT, IGIL…FVKT, IVFS…FYVI, and ILLL…ICEI. An intrachain disulfide couples Cys-101 to Cys-176. Residues 321–347 are disordered; the sequence is QKRKDSDASEHDQNSKSKASVEKNQPL. Residues 322 to 341 show a composition bias toward basic and acidic residues; the sequence is KRKDSDASEHDQNSKSKASV.

It belongs to the G-protein coupled receptor 1 family.

The protein resides in the membrane. Functionally, probable G-protein coupled receptor. The polypeptide is G-protein coupled receptor homolog U12 (U12) (Homo sapiens (Human)).